The following is a 170-amino-acid chain: RNA pyrophosphohydrolase (170 aa).

The region spanning 6 to 149 (GFRPNVGIVI…KRDVYRRALK (144 aa)) is the Nudix hydrolase domain. The Nudix box motif lies at 38–59 (GGIDDGETPEQAMYRELYEEVG).

Belongs to the Nudix hydrolase family. RppH subfamily. The cofactor is a divalent metal cation.

Functionally, accelerates the degradation of transcripts by removing pyrophosphate from the 5'-end of triphosphorylated RNA, leading to a more labile monophosphorylated state that can stimulate subsequent ribonuclease cleavage. The protein is RNA pyrophosphohydrolase of Aliivibrio salmonicida (strain LFI1238) (Vibrio salmonicida (strain LFI1238)).